The sequence spans 260 residues: Pyridoxine 5'-phosphate synthase (260 aa).

Asn-6 is a 3-amino-2-oxopropyl phosphate binding site. A 1-deoxy-D-xylulose 5-phosphate-binding site is contributed by 8 to 9 (DH). Arg-17 is a 3-amino-2-oxopropyl phosphate binding site. The active-site Proton acceptor is His-42. The 1-deoxy-D-xylulose 5-phosphate site is built by Arg-44 and His-49. Glu-69 acts as the Proton acceptor in catalysis. Thr-99 is a binding site for 1-deoxy-D-xylulose 5-phosphate. Residue His-213 is the Proton donor of the active site. 3-amino-2-oxopropyl phosphate-binding positions include Gly-214 and 235–236 (GQ).

This sequence belongs to the PNP synthase family. In terms of assembly, homooctamer; tetramer of dimers.

The protein localises to the cytoplasm. The catalysed reaction is 3-amino-2-oxopropyl phosphate + 1-deoxy-D-xylulose 5-phosphate = pyridoxine 5'-phosphate + phosphate + 2 H2O + H(+). It participates in cofactor biosynthesis; pyridoxine 5'-phosphate biosynthesis; pyridoxine 5'-phosphate from D-erythrose 4-phosphate: step 5/5. In terms of biological role, catalyzes the complicated ring closure reaction between the two acyclic compounds 1-deoxy-D-xylulose-5-phosphate (DXP) and 3-amino-2-oxopropyl phosphate (1-amino-acetone-3-phosphate or AAP) to form pyridoxine 5'-phosphate (PNP) and inorganic phosphate. The protein is Pyridoxine 5'-phosphate synthase of Sulfurimonas denitrificans (strain ATCC 33889 / DSM 1251) (Thiomicrospira denitrificans (strain ATCC 33889 / DSM 1251)).